The chain runs to 437 residues: Epsilon-sarcoglycan (437 aa).

At 1 to 317 (MQLPWWWELG…LKSRDYYTDF (317 aa)) the chain is on the extracellular side. N200 is a glycosylation site (N-linked (GlcNAc...) asparagine). Residues 318 to 338 (LVTLAVPSAVALVLFLILAYI) form a helical membrane-spanning segment. The Cytoplasmic portion of the chain corresponds to 339–437 (MCCRREGVEK…QQQTTGKWYS (99 aa)). The tract at residues 418–437 (QNLPHQTQIPQQQTTGKWYS) is disordered.

This sequence belongs to the sarcoglycan alpha/epsilon family. Post-translationally, N-glycosylated. Ubiquitinated, leading to its degradation by the proteasome.

The protein localises to the cell membrane. It localises to the sarcolemma. Its subcellular location is the cytoplasm. It is found in the cytoskeleton. The protein resides in the cell projection. The protein localises to the dendrite. It localises to the golgi apparatus. Component of the sarcoglycan complex, a subcomplex of the dystrophin-glycoprotein complex which forms a link between the F-actin cytoskeleton and the extracellular matrix. The protein is Epsilon-sarcoglycan (SGCE) of Bos taurus (Bovine).